The primary structure comprises 155 residues: Histone H3-like centromeric protein hH3v (155 aa).

The segment covering 1-24 has biased composition (low complexity); it reads MPPKKGGVTKSKAVSKKAAAVPTP. The segment at 1–56 is disordered; that stretch reads MPPKKGGVTKSKAVSKKAAAVPTPKATPPGRRKSRASSVQPGDPVPQGKKRRYRPG. Residues 45–148 are H3-like; that stretch reads VPQGKKRRYR…IQLARRIRGV (104 aa).

Belongs to the histone H3 family. Component of centromeric nucleosomes, where DNA is wrapped around a histone octamer core. The octamer contains two molecules each of H2A, H2B, hH3v/CENPA and H4 assembled in one hH3v-H4 heterotetramer and two H2A-H2B heterodimers. Interacts with the inner kinetochore. Post-translationally, ubiquitinated. Is degraded through ubiquitin-mediated proteolysis when not protected by its association to the kinetochore.

The protein resides in the nucleus. It localises to the chromosome. Its subcellular location is the centromere. Histone H3-like nucleosomal protein that is specifically found in centromeric nucleosomes. Replaces conventional H3 in the nucleosome core of centromeric chromatin that serves as an assembly site for the inner kinetochore. Required for recruitment and assembly of kinetochore proteins, mitotic progression and chromosome segregation. May serve as an epigenetic mark that propagates centromere identity through replication and cell division. The chain is Histone H3-like centromeric protein hH3v (hH3v) from Neurospora crassa (strain ATCC 24698 / 74-OR23-1A / CBS 708.71 / DSM 1257 / FGSC 987).